Consider the following 2282-residue polypeptide: Serine/threonine-protein kinase TEL1 (2282 aa).

The 520-residue stretch at E1325–T1844 folds into the FAT domain. The PI3K/PI4K catalytic domain occupies V1939–V2250. Residues K1945–H1951 form a G-loop region. A catalytic loop region spans residues G2115–N2123. An activation loop region spans residues H2135–T2159. The FATC domain occupies V2250 to Y2282.

The protein belongs to the PI3/PI4-kinase family. ATM subfamily. Associates with DNA double-strand breaks.

It localises to the nucleus. Its subcellular location is the chromosome. It is found in the telomere. The enzyme catalyses L-seryl-[protein] + ATP = O-phospho-L-seryl-[protein] + ADP + H(+). It carries out the reaction L-threonyl-[protein] + ATP = O-phospho-L-threonyl-[protein] + ADP + H(+). Functionally, serine/threonine protein kinase which activates checkpoint signaling upon genotoxic stresses such as ionizing radiation (IR), ultraviolet light (UV), or DNA replication stalling, thereby acting as a DNA damage sensor. Recognizes the substrate consensus sequence [ST]-Q. Phosphorylates histone H2A to form H2AS128ph (gamma-H2A) at sites of DNA damage, involved in the regulation of DNA damage response mechanism. Required for the control of telomere length and genome stability. This is Serine/threonine-protein kinase TEL1 (TEL1) from Yarrowia lipolytica (strain CLIB 122 / E 150) (Yeast).